The primary structure comprises 390 residues: MSAAIVNAVKQCGYFNQGQCLSCRHIQQPLAQQVAVKTQTLQQLLAPFIPANSAELFLPPITGDDSGFRNKAKMVVLGAAHEPVLGIVGPSGEAVDLCDCLLYPADMQALLHRLTRFVQQAGLPPYRVDKAKGELKFILLTRSQVRGEYLLRFVLRSHNGIERIERELPALLAEYPQIKVVSVNIQPIHMAILEGDEEIFLTENTRLEERFNHVPLFIRPKSFFQTNPQVAAQLYQTAREWVAEFSPRSLWDLFCGVGGFGLHCASNDITLTGIEIEAEAIACAQMSAQMMGLENVQFMALDSTDFAKGKSAADKPDLIIVNPPRRGIGEALCQSLSEFAPKAILYSSCNPKTLAKDLEHIQGYHLTKVQLFDLFPHSDHFEVLAMLVKD.

4 residues coordinate [4Fe-4S] cluster: Cys-12, Cys-20, Cys-23, and Cys-100. S-adenosyl-L-methionine is bound by residues Gln-225, Phe-254, Glu-275, and Asn-322. Cys-349 acts as the Nucleophile in catalysis.

This sequence belongs to the class I-like SAM-binding methyltransferase superfamily. RNA M5U methyltransferase family. RlmC subfamily.

It catalyses the reaction uridine(747) in 23S rRNA + S-adenosyl-L-methionine = 5-methyluridine(747) in 23S rRNA + S-adenosyl-L-homocysteine + H(+). Its function is as follows. Catalyzes the formation of 5-methyl-uridine at position 747 (m5U747) in 23S rRNA. The sequence is that of 23S rRNA (uracil(747)-C(5))-methyltransferase RlmC from Shewanella baltica (strain OS155 / ATCC BAA-1091).